A 400-amino-acid polypeptide reads, in one-letter code: Bifunctional enzyme IspD/IspF (400 aa).

Residues 1–244 form a 2-C-methyl-D-erythritol 4-phosphate cytidylyltransferase region; sequence MSHRVLGTER…LLKERDKMDI (244 aa). The tract at residues 245 to 400 is 2-C-methyl-D-erythritol 2,4-cyclodiphosphate synthase; sequence RTGNGYDVHR…ALATVTLVRT (156 aa). Residues D251 and H253 each coordinate a divalent metal cation. 4-CDP-2-C-methyl-D-erythritol 2-phosphate-binding positions include 251 to 253 and 277 to 278; these read DVH and HS. An a divalent metal cation-binding site is contributed by H285. Residues 299-301, 375-378, F382, and R385 each bind 4-CDP-2-C-methyl-D-erythritol 2-phosphate; these read DIG and TTSE.

This sequence in the N-terminal section; belongs to the IspD/TarI cytidylyltransferase family. IspD subfamily. In the C-terminal section; belongs to the IspF family. A divalent metal cation is required as a cofactor.

The catalysed reaction is 2-C-methyl-D-erythritol 4-phosphate + CTP + H(+) = 4-CDP-2-C-methyl-D-erythritol + diphosphate. The enzyme catalyses 4-CDP-2-C-methyl-D-erythritol 2-phosphate = 2-C-methyl-D-erythritol 2,4-cyclic diphosphate + CMP. It participates in isoprenoid biosynthesis; isopentenyl diphosphate biosynthesis via DXP pathway; isopentenyl diphosphate from 1-deoxy-D-xylulose 5-phosphate: step 2/6. The protein operates within isoprenoid biosynthesis; isopentenyl diphosphate biosynthesis via DXP pathway; isopentenyl diphosphate from 1-deoxy-D-xylulose 5-phosphate: step 4/6. Functionally, bifunctional enzyme that catalyzes the formation of 4-diphosphocytidyl-2-C-methyl-D-erythritol from CTP and 2-C-methyl-D-erythritol 4-phosphate (MEP) (IspD), and catalyzes the conversion of 4-diphosphocytidyl-2-C-methyl-D-erythritol 2-phosphate (CDP-ME2P) to 2-C-methyl-D-erythritol 2,4-cyclodiphosphate (ME-CPP) with a corresponding release of cytidine 5-monophosphate (CMP) (IspF). This is Bifunctional enzyme IspD/IspF from Dinoroseobacter shibae (strain DSM 16493 / NCIMB 14021 / DFL 12).